The sequence spans 139 residues: Ribosome-binding factor A (139 aa).

The tract at residues 112-139 (EARTQGQAAPAPDVEPAPGAAPDDEAEE) is disordered. The span at 119–132 (AAPAPDVEPAPGAA) shows a compositional bias: low complexity.

This sequence belongs to the RbfA family. Monomer. Binds 30S ribosomal subunits, but not 50S ribosomal subunits or 70S ribosomes.

The protein localises to the cytoplasm. One of several proteins that assist in the late maturation steps of the functional core of the 30S ribosomal subunit. Associates with free 30S ribosomal subunits (but not with 30S subunits that are part of 70S ribosomes or polysomes). Required for efficient processing of 16S rRNA. May interact with the 5'-terminal helix region of 16S rRNA. This is Ribosome-binding factor A from Anaeromyxobacter dehalogenans (strain 2CP-1 / ATCC BAA-258).